Consider the following 661-residue polypeptide: Acetyl-coenzyme A synthetase (661 aa).

Residues 199-202 (RGGK) and T317 each bind CoA. ATP contacts are provided by residues 393 to 395 (GEP), 417 to 422 (DTFWQT), D508, and R523. S531 contributes to the CoA binding site. R534 serves as a coordination point for ATP. R596 contributes to the CoA binding site.

Belongs to the ATP-dependent AMP-binding enzyme family.

It carries out the reaction acetate + ATP + CoA = acetyl-CoA + AMP + diphosphate. In Coprinopsis cinerea (Inky cap fungus), this protein is Acetyl-coenzyme A synthetase (ACS-1).